We begin with the raw amino-acid sequence, 418 residues long: Inner capsid protein sigma-2 (418 aa).

It belongs to the orthoreovirus sigma-1 protein family. In terms of assembly, interacts with protein mu-NS; in viral inclusions.

It localises to the virion. Its function is as follows. Inner capsid (core) component. The chain is Inner capsid protein sigma-2 (S2) from Reovirus type 3 (strain Dearing) (T3D).